The primary structure comprises 359 residues: Dual-specificity RNA methyltransferase RlmN (359 aa).

Glutamate 90 functions as the Proton acceptor in the catalytic mechanism. In terms of domain architecture, Radical SAM core spans 109–342; sequence HQERYTVCIS…CTIRESKGLD (234 aa). The cysteines at positions 116 and 347 are disulfide-linked. Positions 123, 127, and 130 each coordinate [4Fe-4S] cluster. S-adenosyl-L-methionine-binding positions include 173-174, serine 205, 228-230, and asparagine 304; these read GE and SLH. Catalysis depends on cysteine 347, which acts as the S-methylcysteine intermediate.

This sequence belongs to the radical SAM superfamily. RlmN family. It depends on [4Fe-4S] cluster as a cofactor.

Its subcellular location is the cytoplasm. The catalysed reaction is adenosine(2503) in 23S rRNA + 2 reduced [2Fe-2S]-[ferredoxin] + 2 S-adenosyl-L-methionine = 2-methyladenosine(2503) in 23S rRNA + 5'-deoxyadenosine + L-methionine + 2 oxidized [2Fe-2S]-[ferredoxin] + S-adenosyl-L-homocysteine. It catalyses the reaction adenosine(37) in tRNA + 2 reduced [2Fe-2S]-[ferredoxin] + 2 S-adenosyl-L-methionine = 2-methyladenosine(37) in tRNA + 5'-deoxyadenosine + L-methionine + 2 oxidized [2Fe-2S]-[ferredoxin] + S-adenosyl-L-homocysteine. In terms of biological role, specifically methylates position 2 of adenine 2503 in 23S rRNA and position 2 of adenine 37 in tRNAs. m2A2503 modification seems to play a crucial role in the proofreading step occurring at the peptidyl transferase center and thus would serve to optimize ribosomal fidelity. This chain is Dual-specificity RNA methyltransferase RlmN, found in Sulfurovum sp. (strain NBC37-1).